The following is a 185-amino-acid chain: UPF0301 protein PSHAa2600 (185 aa).

Belongs to the UPF0301 (AlgH) family.

The sequence is that of UPF0301 protein PSHAa2600 from Pseudoalteromonas translucida (strain TAC 125).